We begin with the raw amino-acid sequence, 41 residues long: Large ribosomal subunit protein bL36 (41 aa).

It belongs to the bacterial ribosomal protein bL36 family.

This Dinoroseobacter shibae (strain DSM 16493 / NCIMB 14021 / DFL 12) protein is Large ribosomal subunit protein bL36.